Reading from the N-terminus, the 298-residue chain is 4-hydroxybenzoate octaprenyltransferase (298 aa).

The next 7 helical transmembrane spans lie at 30–50 (IGTW…AEGI), 54–74 (GTLL…CVVN), 105–125 (VLFA…NLPT), 148–168 (FPQV…FMAI), 218–238 (DRLM…WVGL), 240–260 (LALG…FVFQ), and 275–295 (AFLN…LSLW).

Belongs to the UbiA prenyltransferase family. The cofactor is Mg(2+).

The protein resides in the cell inner membrane. It carries out the reaction all-trans-octaprenyl diphosphate + 4-hydroxybenzoate = 4-hydroxy-3-(all-trans-octaprenyl)benzoate + diphosphate. The protein operates within cofactor biosynthesis; ubiquinone biosynthesis. Catalyzes the prenylation of para-hydroxybenzoate (PHB) with an all-trans polyprenyl group. Mediates the second step in the final reaction sequence of ubiquinone-8 (UQ-8) biosynthesis, which is the condensation of the polyisoprenoid side chain with PHB, generating the first membrane-bound Q intermediate 3-octaprenyl-4-hydroxybenzoate. This is 4-hydroxybenzoate octaprenyltransferase from Chromohalobacter salexigens (strain ATCC BAA-138 / DSM 3043 / CIP 106854 / NCIMB 13768 / 1H11).